The sequence spans 142 residues: NTF2-related export protein 2 (142 aa).

The NTF2 domain maps to 17 to 136; the sequence is AAEEFVNIYY…WKIASDCFRF (120 aa).

In terms of assembly, associates with NXF1, NXF2, NXF3 and NXF5.

It localises to the nucleus. It is found in the cytoplasm. In terms of biological role, regulator of protein export for NES-containing proteins. Also plays a role in mRNA nuclear export. This chain is NTF2-related export protein 2 (Nxt2), found in Mus musculus (Mouse).